The primary structure comprises 99 residues: Large ribosomal subunit protein bL27 (99 aa).

The interval 1–21 is disordered; that stretch reads MAHKKGGGSTRNGRDSRAKRL.

This sequence belongs to the bacterial ribosomal protein bL27 family.

The polypeptide is Large ribosomal subunit protein bL27 (Thermomicrobium roseum (strain ATCC 27502 / DSM 5159 / P-2)).